The following is a 138-amino-acid chain: Putative esterase HI_1161 (138 aa).

Belongs to the thioesterase PaaI family.

The sequence is that of Putative esterase HI_1161 from Haemophilus influenzae (strain ATCC 51907 / DSM 11121 / KW20 / Rd).